Consider the following 100-residue polypeptide: Urease subunit gamma (100 aa).

It belongs to the urease gamma subunit family. In terms of assembly, heterotrimer of UreA (gamma), UreB (beta) and UreC (alpha) subunits. Three heterotrimers associate to form the active enzyme.

It is found in the cytoplasm. The catalysed reaction is urea + 2 H2O + H(+) = hydrogencarbonate + 2 NH4(+). The protein operates within nitrogen metabolism; urea degradation; CO(2) and NH(3) from urea (urease route): step 1/1. This chain is Urease subunit gamma, found in Trichormus variabilis (strain ATCC 29413 / PCC 7937) (Anabaena variabilis).